Here is a 520-residue protein sequence, read N- to C-terminus: MKNLTSFVIVILLQSLLFHVYGRHQSSSKNILVDSSPFPSDFLFGTASSAYQYEGAFLTDGKSLNNWDVFTHKNPGKILDKNNADRAVDQYNRFLEDIQLMSFLGVNSYRFSISWCRILPRGRFGEINYLGIKYYNIFIDALISRGIKPFVTLNHVDYPQELEDRFQSWLNPEMQKEFGYLADICFKHFGNRVKYWTTLNEPNQQLILGYLTGKFPPSRCSSPYGNCSQGNSETEPFIAAHNMILAHAKAVNIYKTKYQKEQKGSIGIVVQTSWFEPISDSNADKEAAERAQSFYSNWILDPVIYGKYPKEMVDILGPALPQFSSNEVKNLEKSRADFVGINHYTSYFIQDCLTSACNTGHGAFKAEGYALKLDRKGNVTIGELTDVNWQHIDPTGFHKMLNYLKDRYPNMPMFITENGFGDLQKPETTDKELLNDTKRIQYMSGYLEALQAAMRDGANVKGYFVWSLLDNFEWLFGYKVRFGLFHVDLTTLKRSPKQSASWYKNYIEEHVNRRDIVDNY.

The signal sequence occupies residues 1–22; that stretch reads MKNLTSFVIVILLQSLLFHVYG. A glycan (N-linked (GlcNAc...) asparagine) is linked at N3. Residues Q52, H155, and 200–201 contribute to the a beta-D-glucoside site; that span reads NE. E201 (proton donor) is an active-site residue. A disulfide bridge links C220 with C227. N-linked (GlcNAc...) asparagine glycosylation occurs at N226. Y344 serves as a coordination point for a beta-D-glucoside. Residues C352 and C357 are joined by a disulfide bond. Residue N378 is glycosylated (N-linked (GlcNAc...) asparagine). Position 417 (E417) interacts with a beta-D-glucoside. E417 acts as the Nucleophile in catalysis. Residue N435 is glycosylated (N-linked (GlcNAc...) asparagine). Residues W466, 473–474, and F482 each bind a beta-D-glucoside; that span reads EW.

The protein belongs to the glycosyl hydrolase 1 family. Expressed in stems and siliques.

It carries out the reaction Hydrolysis of terminal, non-reducing beta-D-glucosyl residues with release of beta-D-glucose.. Functionally, hydrolyzes p-nitrophenyl beta-D-glucoside and natural glucosides such as syringin, coniferin and p-coumaryl alcohol glucoside. May be involved in lignification by hydrolyzing monolignol glucosides. The protein is Beta-glucosidase 45 of Arabidopsis thaliana (Mouse-ear cress).